Reading from the N-terminus, the 151-residue chain is Large ribosomal subunit protein bL9 (151 aa).

It belongs to the bacterial ribosomal protein bL9 family.

Its function is as follows. Binds to the 23S rRNA. The sequence is that of Large ribosomal subunit protein bL9 from Mycolicibacterium gilvum (strain PYR-GCK) (Mycobacterium gilvum (strain PYR-GCK)).